The chain runs to 1713 residues: Serine/threonine-protein kinase MRCK beta (1713 aa).

Residues 76–342 (FEIIKVIGRG…IEDFKKHAFF (267 aa)) enclose the Protein kinase domain. ATP contacts are provided by residues 82–90 (IGRGAFGEV) and lysine 105. The active-site Proton acceptor is the aspartate 200. Phosphoserine; by autocatalysis occurs at positions 221 and 233. Threonine 239 is modified (phosphothreonine; by autocatalysis). The 71-residue stretch at 343–413 (EGLNWENIRN…TTESCFSDRG (71 aa)) folds into the AGC-kinase C-terminal domain. At threonine 423 the chain carries Phosphothreonine. A coiled-coil region spans residues 434–649 (LENSLQIEAY…ASKERKLREH (216 aa)). Positions 461 to 485 (LQESTQTVQSLHGSTRALGNSNRDK) are disordered. Residues 463–481 (ESTQTVQSLHGSTRALGNS) are compositionally biased toward polar residues. Residue arginine 671 is modified to Omega-N-methylarginine. Coiled-coil stretches lie at residues 681–815 (QEIS…AHWE) and 882–939 (ALEA…FRAD). Serine 927 bears the Phosphoserine mark. Tyrosine 954 is modified (phosphotyrosine). Composition is skewed to polar residues over residues 971–994 (ASDQETQASKLDLSPSVSVATSTE) and 1001–1014 (RSQQRPSTVPLPNT). The disordered stretch occupies residues 971-1014 (ASDQETQASKLDLSPSVSVATSTEQQEDAARSQQRPSTVPLPNT). The Phorbol-ester/DAG-type zinc finger occupies 1026 to 1076 (AHQFSIKSFPSPTQCSHCTSLMVGLIRQGYACEVCAFSCHVSCKDSAPQVC). A PH domain is found at 1096 to 1215 (GTAYKGYVKV…WVGILEGLQA (120 aa)). One can recognise a CNH domain in the interval 1241–1515 (IKTVLAAAIV…RPLNSDGSLN (275 aa)). A CRIB domain is found at 1585–1598 (ISNPTNFNHVAHMG). The disordered stretch occupies residues 1615–1713 (PTAQEEKQGP…EGLDQPACDA (99 aa)). Basic and acidic residues predominate over residues 1666–1677 (DFDKEPDSDSTK). A phosphoserine mark is found at serine 1682, serine 1684, serine 1688, serine 1692, and serine 1695.

Belongs to the protein kinase superfamily. AGC Ser/Thr protein kinase family. DMPK subfamily. Homodimer and homotetramer via the coiled coil regions. Interacts tightly with GTP-bound but not GDP-bound CDC42. Interacts with TJP1; this interaction requires the presence of catalytically active CDC42. Forms a tripartite complex with MYO18A and LURAP1 with the latter acting as an adapter connecting CDC42BPB and MYO18A. LURAP1 binding results in activation of CDC42BPB by abolition of its negative autoregulation. Interacts with STRIP1, STRN3 and SIKE1. Interacts with CPNE4 (via VWFA domain). Interacts with LURAP1. Interacts (via AGC-kinase C-terminal domain) with FAM89B/LRAP25 (via LRR repeat). Forms a tripartite complex with FAM89B/LRAP25 and LIMK1. The cofactor is Mg(2+). Proteolytically cleaved by caspases upon apoptosis induction. In terms of tissue distribution, expressed in all tissues examined with highest levels in lung and kidney.

The protein resides in the cytoplasm. The protein localises to the cell membrane. It localises to the cell junction. It is found in the cell projection. Its subcellular location is the lamellipodium. It catalyses the reaction L-seryl-[protein] + ATP = O-phospho-L-seryl-[protein] + ADP + H(+). The enzyme catalyses L-threonyl-[protein] + ATP = O-phospho-L-threonyl-[protein] + ADP + H(+). With respect to regulation, maintained in an inactive, closed conformation by an interaction between the kinase domain and the negative autoregulatory C-terminal coiled-coil region. Agonist binding to the phorbol ester binding site disrupts this, releasing the kinase domain to allow N-terminus-mediated dimerization and kinase activation by transautophosphorylation. Inhibited by chelerythrine chloride. Serine/threonine-protein kinase which is an important downstream effector of CDC42 and plays a role in the regulation of cytoskeleton reorganization and cell migration. Regulates actin cytoskeletal reorganization via phosphorylation of PPP1R12C and MYL9/MLC2. In concert with MYO18A and LURAP1, is involved in modulating lamellar actomyosin retrograde flow that is crucial to cell protrusion and migration. Phosphorylates PPP1R12A. In concert with FAM89B/LRAP25 mediates the targeting of LIMK1 to the lamellipodium resulting in its activation and subsequent phosphorylation of CFL1 which is important for lamellipodial F-actin regulation. In Rattus norvegicus (Rat), this protein is Serine/threonine-protein kinase MRCK beta.